Consider the following 91-residue polypeptide: Late embryogenesis abundant protein EMB564 (91 aa).

Composition is skewed to basic and acidic residues over residues 1–19 and 32–51; these read MASG…REGE and EAQE…RREQ. The interval 1-91 is disordered; it reads MASGQESRKE…VTIDESKFTK (91 aa).

This sequence belongs to the small hydrophilic plant seed protein family.

Its function is as follows. LEA proteins are late embryonic proteins abundant in higher plant seed embryos. They may play an essential role in seed survival and in controlling water exchanges during seed desiccation and imbibition. This Zea mays (Maize) protein is Late embryogenesis abundant protein EMB564.